A 723-amino-acid chain; its full sequence is Threonine--tRNA ligase 1, cytoplasmic (723 aa).

The interval 1–46 (MFEEKASSPSGKMGGEEKPIGAGEEKQKEGGKKKNKEGSGDGGRAE) is disordered. Over residues 14–39 (GGEEKPIGAGEEKQKEGGKKKNKEGS) the composition is skewed to basic and acidic residues. Phosphoserine is present on serine 39. The TGS domain maps to 79–143 (DSKPIKVTLP…EEDCTLELLK (65 aa)). The residue at position 243 (lysine 243) is an N6-acetyllysine. A Phosphothreonine modification is found at threonine 246. A Phosphotyrosine modification is found at tyrosine 298. Threonine 453 is modified (phosphothreonine). Position 702 is a phosphoserine (serine 702).

This sequence belongs to the class-II aminoacyl-tRNA synthetase family. Homodimer. In terms of processing, ISGylated.

It is found in the cytoplasm. The catalysed reaction is tRNA(Thr) + L-threonine + ATP = L-threonyl-tRNA(Thr) + AMP + diphosphate + H(+). Inhibited by borrelidin (BN, IC 50 is 7 nM), which binds to 4 distinct subsites in the protein, preventing binding of all 3 substrates. Its function is as follows. Catalyzes the attachment of threonine to tRNA(Thr) in a two-step reaction: threonine is first activated by ATP to form Thr-AMP and then transferred to the acceptor end of tRNA(Thr). Also edits incorrectly charged tRNA(Thr) via its editing domain, at the post-transfer stage. In Homo sapiens (Human), this protein is Threonine--tRNA ligase 1, cytoplasmic.